The following is a 377-amino-acid chain: Pseudouridylate synthase RPUSD4, mitochondrial (377 aa).

The N-terminal 15 residues, 1–15 (MAAPRWSASGPWIRG), are a transit peptide targeting the mitochondrion. Residues 36–62 (AASTAINAQRLAEKLRAQKREQDTKKE) adopt a coiled-coil conformation. The active site involves Asp153.

It belongs to the pseudouridine synthase RluA family. In terms of assembly, interacts with 16S mt-rRNA, mt-tRNA(Phe) and mt-tRNA(Met). Forms a regulatory protein-RNA complex, consisting of RCC1L, NGRN, RPUSD3, RPUSD4, TRUB2, FASTKD2 and 16S mt-rRNA.

Its subcellular location is the mitochondrion matrix. It localises to the nucleus. The protein localises to the cytoplasm. The catalysed reaction is uridine in 5S rRNA = pseudouridine in 5S rRNA. It carries out the reaction a uridine in tRNA = a pseudouridine in tRNA. It catalyses the reaction a uridine in mRNA = a pseudouridine in mRNA. Catalyzes uridine to pseudouridine isomerization (pseudouridylation) of different mitochondrial RNA substrates. Acts on position 1397 in 16S mitochondrial ribosomal RNA (16S mt-rRNA). This modification is required for the assembly of 16S mt-rRNA into a functional mitochondrial ribosome. As a component of a functional protein-RNA module, consisting of RCC1L, NGRN, RPUSD3, RPUSD4, TRUB2, FASTKD2 and 16S mt-rRNA, controls 16S mt-rRNA abundance and is required for intra-mitochondrial translation. Acts on position 39 in mitochondrial tRNA(Phe). Also catalyzes pseudouridylation of mRNAs in nucleus: acts as a regulator of pre-mRNA splicing by mediating pseudouridylation of pre-mRNAs at locations associated with alternatively spliced regions. Pseudouridylation of pre-mRNAs near splice sites directly regulates mRNA splicing and mRNA 3'-end processing. This chain is Pseudouridylate synthase RPUSD4, mitochondrial, found in Homo sapiens (Human).